Here is a 607-residue protein sequence, read N- to C-terminus: WD repeat-containing protein 1 (607 aa).

WD repeat units follow at residues 4-45 (ELKK…IRNI), 48-87 (PAIADIYTEHAHPVVVARYAPSGFYIASGDTSGKLRIWDT), 93-135 (LLKY…LWDT), 138-176 (SVGEISGNIKVINSVDIKQTRPYRLVTGSDDNCCAFFEG), 180-218 (KFKFTMADHSRFVNCVRFSPDGSRLASAGADGQIFLYDG), 224-263 (VGNLGGSKAHDGGIYAVSWSADSTQLLSASGDKTAKIWDV), 270-306 (TTFHLGTEVLDQQLGCLWQKDYLLSVSLSGYINYLDK), 311-351 (RPLR…YWDA), 358-408 (TFTG…KMDV), 432-474 (LKDK…LYSI), 480-518 (KDEGKSLPVKGAVTDLAYSHDGAFLAVTDANKVVTVFNV), 523-561 (SEQNVYYGHHAKAVSVAWSPDNEHFASSGMDMMVYVWTL), and 566-604 (ARIKIPDAHRLHHVSSLAWLDEHTLATVSHDACVKQWTV).

The protein belongs to the WD repeat AIP1 family.

Its subcellular location is the cell membrane. The protein resides in the cytoplasm. It localises to the cytoskeleton. It is found in the nucleus. Its function is as follows. Induces disassembly of actin filaments in conjunction with ADF/cofilin family proteins. Doesn't sever actin filaments alone, but caps the barbed ends of filaments severed by cofilin, which blocks annealing and depolymerization and allows more extensive severing by cofilin. The sequence is that of WD repeat-containing protein 1 from Xenopus tropicalis (Western clawed frog).